Consider the following 120-residue polypeptide: UPF0102 protein TWT_455 (120 aa).

It belongs to the UPF0102 family.

This chain is UPF0102 protein TWT_455, found in Tropheryma whipplei (strain Twist) (Whipple's bacillus).